Reading from the N-terminus, the 162-residue chain is 2-C-methyl-D-erythritol 2,4-cyclodiphosphate synthase (162 aa).

A divalent metal cation-binding residues include aspartate 12 and histidine 14. Residues aspartate 12–histidine 14 and histidine 38–serine 39 each bind 4-CDP-2-C-methyl-D-erythritol 2-phosphate. Histidine 46 serves as a coordination point for a divalent metal cation. Residues aspartate 60–glycine 62, threonine 136–glutamate 139, phenylalanine 143, and arginine 146 each bind 4-CDP-2-C-methyl-D-erythritol 2-phosphate.

It belongs to the IspF family. In terms of assembly, homotrimer. The cofactor is a divalent metal cation.

It catalyses the reaction 4-CDP-2-C-methyl-D-erythritol 2-phosphate = 2-C-methyl-D-erythritol 2,4-cyclic diphosphate + CMP. The protein operates within isoprenoid biosynthesis; isopentenyl diphosphate biosynthesis via DXP pathway; isopentenyl diphosphate from 1-deoxy-D-xylulose 5-phosphate: step 4/6. Involved in the biosynthesis of isopentenyl diphosphate (IPP) and dimethylallyl diphosphate (DMAPP), two major building blocks of isoprenoid compounds. Catalyzes the conversion of 4-diphosphocytidyl-2-C-methyl-D-erythritol 2-phosphate (CDP-ME2P) to 2-C-methyl-D-erythritol 2,4-cyclodiphosphate (ME-CPP) with a corresponding release of cytidine 5-monophosphate (CMP). The sequence is that of 2-C-methyl-D-erythritol 2,4-cyclodiphosphate synthase from Porphyromonas gingivalis (strain ATCC 33277 / DSM 20709 / CIP 103683 / JCM 12257 / NCTC 11834 / 2561).